Here is a 153-residue protein sequence, read N- to C-terminus: Small ribosomal subunit protein uS17 (153 aa).

Belongs to the universal ribosomal protein uS17 family.

The chain is Small ribosomal subunit protein uS17 (RpS11) from Anopheles gambiae (African malaria mosquito).